The primary structure comprises 183 residues: NEDD8-conjugating enzyme Ubc12 (183 aa).

The residue at position 1 (methionine 1) is an N-acetylmethionine. A disordered region spans residues 1–28; the sequence is MIKLFSLKQQKKEEESAGGTKGSSKKAS. A UBC core domain is found at 29 to 173; that stretch reads AAQLRIQKDI…VQRSMRGGYI (145 aa). The active-site Glycyl thioester intermediate is cysteine 111.

This sequence belongs to the ubiquitin-conjugating enzyme family. UBC12 subfamily. The acetylation of Met-1 increases affinity for DCUN1D1 by about 2 orders of magnitude and is crucial for NEDD8 transfer to cullins.

It catalyses the reaction [E1 NEDD8-activating enzyme]-S-[NEDD8 protein]-yl-L-cysteine + [E2 NEDD8-conjugating enzyme]-L-cysteine = [E1 NEDD8-activating enzyme]-L-cysteine + [E2 NEDD8-conjugating enzyme]-S-[NEDD8-protein]-yl-L-cysteine.. The protein operates within protein modification; protein neddylation. In terms of biological role, accepts the ubiquitin-like protein NEDD8 from the UBA3-NAE1 E1 complex and catalyzes its covalent attachment to other proteins. The specific interaction with the E3 ubiquitin ligase rbx1, but not rbx2, suggests that the rbx1-ube2m complex neddylates specific target proteins, such as cul1, cul2, cul3 and cul4. Involved in cell proliferation. This Xenopus tropicalis (Western clawed frog) protein is NEDD8-conjugating enzyme Ubc12 (ube2m).